Here is a 169-residue protein sequence, read N- to C-terminus: Putative antitoxin Rv0268c (169 aa).

Basic residues predominate over residues 1 to 11 (MGTRSKSRTRQ). Positions 1 to 35 (MGTRSKSRTRQLKQSNGCTATTSGASDRRRRARRR) are disordered. Residues 120 to 153 (AAILISAERYESLMEELEDLRDRLSVHEREHVTM) are a coiled coil.

It belongs to the phD/YefM antitoxin family.

In terms of biological role, putative antitoxin component of a type II toxin-antitoxin (TA) system; however the expected toxin coding sequence is not found adjacent to this gene. This chain is Putative antitoxin Rv0268c, found in Mycobacterium tuberculosis (strain ATCC 25618 / H37Rv).